Consider the following 145-residue polypeptide: Putative transcriptional regulatory protein PYRAB13000 (145 aa).

This sequence belongs to the Tfx family.

Putative transcriptional regulator. The polypeptide is Putative transcriptional regulatory protein PYRAB13000 (Pyrococcus abyssi (strain GE5 / Orsay)).